Here is a 452-residue protein sequence, read N- to C-terminus: Pentatricopeptide repeat-containing protein At2g30780 (452 aa).

7 PPR repeats span residues 137–171 (TASV…THCA), 173–207 (TVVT…KLPP), 208–242 (NSVT…PVEP), 243–273 (DTDT…IKDQ), 350–384 (KSSI…GWKL), 385–419 (CRSL…NYGL), and 420–452 (VTKT…KRGL).

This sequence belongs to the PPR family. P subfamily.

The chain is Pentatricopeptide repeat-containing protein At2g30780 from Arabidopsis thaliana (Mouse-ear cress).